We begin with the raw amino-acid sequence, 37 residues long: MKIRSSVKKICNKCYLIRRKNNLLVVCINNKHKQRQG.

It belongs to the bacterial ribosomal protein bL36 family.

Its subcellular location is the plastid. It is found in the chloroplast. This Euglena gracilis protein is Large ribosomal subunit protein bL36c (rpl36).